We begin with the raw amino-acid sequence, 162 residues long: Phosphopantetheine adenylyltransferase (162 aa).

Position 11 (Ser-11) interacts with substrate. Residues 11-12 (SF) and His-19 contribute to the ATP site. The substrate site is built by Lys-43, Val-76, and Arg-90. Residues 91 to 93 (GLR), Glu-101, and 126 to 132 (HLYISSS) each bind ATP.

Belongs to the bacterial CoaD family. In terms of assembly, homohexamer. Mg(2+) serves as cofactor.

The protein localises to the cytoplasm. The catalysed reaction is (R)-4'-phosphopantetheine + ATP + H(+) = 3'-dephospho-CoA + diphosphate. It participates in cofactor biosynthesis; coenzyme A biosynthesis; CoA from (R)-pantothenate: step 4/5. Functionally, reversibly transfers an adenylyl group from ATP to 4'-phosphopantetheine, yielding dephospho-CoA (dPCoA) and pyrophosphate. This is Phosphopantetheine adenylyltransferase from Streptococcus pneumoniae (strain ATCC 700669 / Spain 23F-1).